Reading from the N-terminus, the 318-residue chain is MSFSSDTKDELARIYPEEEESKIAELAALIRTIGSISMYGNGKISLTFTTENASVARLVFKLIKDLFGIIPETMVRRGRYLKKTLSYLIFVPDTKIAEEILGKVKILNYEKGHIKLNYGIDQKILKNSKAKKAYLRGAFLGGGSISDPEKAYHMEFITHNLEHGKDLSKLINSFDLNSKVIARKNNYVVYLKEGEQIVDVLNIIGAHSALLNLENIRVYKEMRNNVNRIVNCETANLTKTINASLRQIESINYIKETVGLDYLPPNLKEVAELRINYPDLSLKELGQMLVPPVGKSGVNHRLRKIEEISKKLKERRVQ.

Residues 281-314 constitute a DNA-binding region (H-T-H motif); the sequence is SLKELGQMLVPPVGKSGVNHRLRKIEEISKKLKE.

Belongs to the WhiA family.

Its function is as follows. Involved in cell division and chromosome segregation. This Thermoanaerobacter sp. (strain X514) protein is Probable cell division protein WhiA.